A 582-amino-acid chain; its full sequence is MAGLNQKSILDMIKEFRRNWHTLCNSERTTVCGADSMLLALQLSMAENNKQHSGEFTVSLSDIILTWKYFLHEKLNLPVENIKVIDHYEDIRKIYDDFLKNSNMLDLIDVYKKCSDLTSNCENYANISPSRLLDFLSGREYAVDDETDFSEPVSPMSKHNQENEKVQLLAKKIIYSYLNLLVNSKNDLALAHILNIPDRGLGREAFTDLKHAAREKQMSIFLVATSFIRTIELGGKGYAPSPSDPLRAHIKGLSNFINFIDKLDEILGEVSNPSIAGGRILSVIKMQLIKGQNSRDPFYKAVEEVAQDLDLRIKNIINSQQGDVALSTTDISPARPKSHTINHGTAYCGRDTVKALLVLLDEEAASAPTKNKAELLYDNENTIHPNGTSVLTLFRCRSPTQVDNSPMKPLRERIYKSMEEKKIKMKQTSIRSQFACTYKDDCMISKDKWNNVNSASEPLCVLHMENDLSEGVNSSVGRPTIGTSSGNVHLGRSEKEKVARKSSSLTGNTSSKRKQVDLDDENILCDNGNEPLQHKIVKIPKTSKDLQNKLDGKLLRVAKSNRCTTKDKLITGQTKLTQFFRL.

2 stretches are compositionally biased toward polar residues: residues 471–487 and 501–510; these read GVNS…SSGN and KSSSLTGNTS. The interval 471 to 514 is disordered; sequence GVNSSVGRPTIGTSSGNVHLGRSEKEKVARKSSSLTGNTSSKRK.

It belongs to the PARI family. Interacts with RAD51 and PCNA. Interacts with PARP1. Interacts with TASOR.

It is found in the cytoplasm. The protein localises to the nucleus. Required to suppress inappropriate homologous recombination, thereby playing a central role DNA repair and in the maintenance of genomic stability. Antagonizes homologous recombination by interfering with the formation of the RAD51-DNA homologous recombination structure. Binds single-strand DNA and poly(A) homopolymers. Positively regulate the poly(ADP-ribosyl)ation activity of PARP1; however such function may be indirect. The chain is PCNA-interacting partner (PARPBP) from Bos taurus (Bovine).